We begin with the raw amino-acid sequence, 289 residues long: MDNKIIYLTELDSSVDKSEPFVMGIDEAGRGPVMGPMVYGCCYAPISKSTTLKSMKFNDSKKLTEQQRDQLFDKMGESNKILAYETDVITAEILSEKMLYKKPISLNVISHESAIGLIRSVLKKGVNVQELYLDTVGPPDKYQLMLKKLFPEIGKIIVSKKADSLYPIVSAASIAAKVVRDFEITNKNFDYLNIYDQDEQLSTDFGSGYPSDPLSKKWLVKNRDKVFGYPNFIRFSWKTTETAMRGACFGVDWVLENDKLKQHFQENQNDKKRFMFFKENNIENCINDF.

Positions 20–249 (PFVMGIDEAG…TETAMRGACF (230 aa)) constitute an RNase H type-2 domain. Residues Asp26, Glu27, and Asp134 each contribute to the a divalent metal cation site.

The protein belongs to the RNase HII family. Eukaryotic subfamily. Mn(2+) serves as cofactor. The cofactor is Mg(2+).

It carries out the reaction Endonucleolytic cleavage to 5'-phosphomonoester.. In terms of biological role, endonuclease that specifically degrades the RNA of RNA-DNA hybrids. Participates in DNA replication. This chain is Ribonuclease H2 subunit A (rnaseh2A), found in Dictyostelium discoideum (Social amoeba).